The chain runs to 193 residues: Potassium-transporting ATPase KdpC subunit (193 aa).

The chain crosses the membrane as a helical span at residues 14-34 (ITFTFLVLCGLVYPLIVTGIA).

Belongs to the KdpC family. The system is composed of three essential subunits: KdpA, KdpB and KdpC.

The protein localises to the cell membrane. In terms of biological role, part of the high-affinity ATP-driven potassium transport (or Kdp) system, which catalyzes the hydrolysis of ATP coupled with the electrogenic transport of potassium into the cytoplasm. This subunit acts as a catalytic chaperone that increases the ATP-binding affinity of the ATP-hydrolyzing subunit KdpB by the formation of a transient KdpB/KdpC/ATP ternary complex. This Bacillus cereus (strain ATCC 14579 / DSM 31 / CCUG 7414 / JCM 2152 / NBRC 15305 / NCIMB 9373 / NCTC 2599 / NRRL B-3711) protein is Potassium-transporting ATPase KdpC subunit.